The sequence spans 151 residues: Small ribosomal subunit protein uS19 (151 aa).

The protein belongs to the universal ribosomal protein uS19 family.

Functionally, protein S19 forms a complex with S13 that binds strongly to the 16S ribosomal RNA. This chain is Small ribosomal subunit protein uS19 (rps19), found in Thermoplasma acidophilum (strain ATCC 25905 / DSM 1728 / JCM 9062 / NBRC 15155 / AMRC-C165).